Reading from the N-terminus, the 82-residue chain is RNA-binding protein Hfq (82 aa).

In terms of domain architecture, Sm spans 10–70; the sequence is DAFLNQVRKD…ISTVAPLRPI (61 aa).

Belongs to the Hfq family. In terms of assembly, homohexamer.

RNA chaperone that binds small regulatory RNA (sRNAs) and mRNAs to facilitate mRNA translational regulation in response to envelope stress, environmental stress and changes in metabolite concentrations. Also binds with high specificity to tRNAs. The chain is RNA-binding protein Hfq from Syntrophomonas wolfei subsp. wolfei (strain DSM 2245B / Goettingen).